The following is a 419-amino-acid chain: uncharacterized protein (419 aa).

This is an uncharacterized protein from Schizosaccharomyces pombe (strain 972 / ATCC 24843) (Fission yeast).